The following is a 195-amino-acid chain: MIRMTETENDDRNIILIGYRGTGKTSVGQELARRLHRPFHDTDVLIEKREGRSIRDMVAREGWAFFRERERAAISSLDGLRRCVLATGGGAVLDPKNAEVLKSLGWVVLLTASEEIIVRRILNDPASREQRPSFSGKASTEISEETMRKETTEILKQRMPIYRVLADQIIDTSQISTAEIVDEILRRFQSQRFNV.

21-26 is a binding site for ATP; that stretch reads GTGKTS. Threonine 25 provides a ligand contact to Mg(2+). Residues aspartate 43, arginine 67, and glycine 89 each coordinate substrate. The tract at residues 128-148 is disordered; it reads REQRPSFSGKASTEISEETMR. Residue arginine 131 participates in ATP binding. Residues 132-141 show a composition bias toward polar residues; that stretch reads PSFSGKASTE. Substrate is bound at residue arginine 158.

Belongs to the shikimate kinase family. In terms of assembly, monomer. Mg(2+) is required as a cofactor.

It localises to the cytoplasm. It carries out the reaction shikimate + ATP = 3-phosphoshikimate + ADP + H(+). Its pathway is metabolic intermediate biosynthesis; chorismate biosynthesis; chorismate from D-erythrose 4-phosphate and phosphoenolpyruvate: step 5/7. Functionally, catalyzes the specific phosphorylation of the 3-hydroxyl group of shikimic acid using ATP as a cosubstrate. This Syntrophus aciditrophicus (strain SB) protein is Shikimate kinase.